The primary structure comprises 181 residues: Inorganic pyrophosphatase (181 aa).

Substrate-binding residues include lysine 16, arginine 30, and tyrosine 42. 3 residues coordinate Mg(2+): aspartate 52, aspartate 57, and aspartate 89. A substrate-binding site is contributed by tyrosine 126.

It belongs to the PPase family. Homohexamer. Mg(2+) is required as a cofactor.

Its subcellular location is the cytoplasm. The catalysed reaction is diphosphate + H2O = 2 phosphate + H(+). In terms of biological role, catalyzes the hydrolysis of inorganic pyrophosphate (PPi) forming two phosphate ions. In Ureaplasma parvum serovar 3 (strain ATCC 700970), this protein is Inorganic pyrophosphatase.